The chain runs to 432 residues: Proline--tRNA ligase (432 aa).

This sequence belongs to the class-II aminoacyl-tRNA synthetase family. ProS type 2 subfamily. As to quaternary structure, homodimer.

Its subcellular location is the cytoplasm. The catalysed reaction is tRNA(Pro) + L-proline + ATP = L-prolyl-tRNA(Pro) + AMP + diphosphate. Its function is as follows. Catalyzes the attachment of proline to tRNA(Pro) in a two-step reaction: proline is first activated by ATP to form Pro-AMP and then transferred to the acceptor end of tRNA(Pro). This is Proline--tRNA ligase from Rickettsia prowazekii (strain Madrid E).